Reading from the N-terminus, the 79-residue chain is ATP synthase subunit c (79 aa).

Transmembrane regions (helical) follow at residues 11-31 (ISAAIIMGFASIGAAIGIGIL) and 55-75 (IVMGLVDAIPMISVGLGLYLI).

It belongs to the ATPase C chain family. In terms of assembly, F-type ATPases have 2 components, F(1) - the catalytic core - and F(0) - the membrane proton channel. F(1) has five subunits: alpha(3), beta(3), gamma(1), delta(1), epsilon(1). F(0) has three main subunits: a(1), b(2) and c(10-14). The alpha and beta chains form an alternating ring which encloses part of the gamma chain. F(1) is attached to F(0) by a central stalk formed by the gamma and epsilon chains, while a peripheral stalk is formed by the delta and b chains.

The protein localises to the cell membrane. Its function is as follows. F(1)F(0) ATP synthase produces ATP from ADP in the presence of a proton or sodium gradient. F-type ATPases consist of two structural domains, F(1) containing the extramembraneous catalytic core and F(0) containing the membrane proton channel, linked together by a central stalk and a peripheral stalk. During catalysis, ATP synthesis in the catalytic domain of F(1) is coupled via a rotary mechanism of the central stalk subunits to proton translocation. In terms of biological role, key component of the F(0) channel; it plays a direct role in translocation across the membrane. A homomeric c-ring of between 10-14 subunits forms the central stalk rotor element with the F(1) delta and epsilon subunits. This Wigglesworthia glossinidia brevipalpis protein is ATP synthase subunit c.